We begin with the raw amino-acid sequence, 340 residues long: MQFVNFFPLLALVVISLAGKATVEAATGLNPPVKLVWHYYKLTNTCDDAETYIRYQVEKFYKNDSSIAPKLLRLLYSDCMVNGCDGSILLQGPNSERTAPQNRGLGGFVIIDKIKQVLESRCPGVVSCADILNLATRDAVHMAGAPSYPVFTGRRDGGTLNADAVDLPSPSISVDESLAYFKSKGLDVLDMTTLLGAHSMGKTHCSYVVDRLYNFKNTGKPDPTMNTTLVSQLRYLCPPRTQKGQTDPLVYLNPDSGSSNRFTSSYYSRVLSHNAVLRVDQELLNNDDSKEITQEFASGFEDFRKSFALAMSRMGSINVLTGTAGEIRRDCRVTNANDGA.

The N-terminal stretch at 1–25 (MQFVNFFPLLALVVISLAGKATVEA) is a signal peptide. 4 disulfide bridges follow: Cys46–Cys122, Cys79–Cys84, Cys128–Cys331, and Cys205–Cys237. The N-linked (GlcNAc...) asparagine glycan is linked to Asn63. Arg73 is an active-site residue. Positions 78, 81, 83, 85, and 87 each coordinate Ca(2+). Pro168 lines the substrate pocket. Residue His198 coordinates heme b. Position 199 (Ser199) interacts with Ca(2+). A glycan (N-linked (GlcNAc...) asparagine) is linked at Asn226. Residues Asp255 and Ser258 each coordinate Ca(2+).

Belongs to the peroxidase family. Classical plant (class III) peroxidase subfamily. It depends on heme b as a cofactor. Ca(2+) is required as a cofactor.

The protein resides in the secreted. It carries out the reaction 2 a phenolic donor + H2O2 = 2 a phenolic radical donor + 2 H2O. Its function is as follows. Removal of H(2)O(2), oxidation of toxic reductants, biosynthesis and degradation of lignin, suberization, auxin catabolism, response to environmental stresses such as wounding, pathogen attack and oxidative stress. The enzyme activity has to be proved. The polypeptide is Probable peroxidase 61 (PER61) (Arabidopsis thaliana (Mouse-ear cress)).